A 308-amino-acid chain; its full sequence is Coenzyme PQQ synthesis protein B (308 aa).

This sequence belongs to the PqqB family.

It participates in cofactor biosynthesis; pyrroloquinoline quinone biosynthesis. Its function is as follows. May be involved in the transport of PQQ or its precursor to the periplasm. This chain is Coenzyme PQQ synthesis protein B, found in Klebsiella pneumoniae (strain 342).